Consider the following 419-residue polypeptide: Diaminopimelate decarboxylase (419 aa).

N6-(pyridoxal phosphate)lysine is present on Lys-56. Pyridoxal 5'-phosphate contacts are provided by residues Gly-234 and 274 to 277 (EPGR). Residues Arg-277, Arg-312, and Tyr-316 each contribute to the substrate site. Cys-343 (proton donor) is an active-site residue. Residues Glu-344 and Tyr-372 each coordinate substrate. Tyr-372 contributes to the pyridoxal 5'-phosphate binding site.

Belongs to the Orn/Lys/Arg decarboxylase class-II family. LysA subfamily. As to quaternary structure, homodimer. The cofactor is pyridoxal 5'-phosphate.

The enzyme catalyses meso-2,6-diaminopimelate + H(+) = L-lysine + CO2. Its pathway is amino-acid biosynthesis; L-lysine biosynthesis via DAP pathway; L-lysine from DL-2,6-diaminopimelate: step 1/1. Specifically catalyzes the decarboxylation of meso-diaminopimelate (meso-DAP) to L-lysine. This is Diaminopimelate decarboxylase from Archaeoglobus fulgidus (strain ATCC 49558 / DSM 4304 / JCM 9628 / NBRC 100126 / VC-16).